We begin with the raw amino-acid sequence, 123 residues long: Fluoride-specific ion channel FluC 2 (123 aa).

The next 4 helical transmembrane spans lie at 3 to 23, 38 to 58, 62 to 82, and 94 to 114; these read LDGFIYILVGSTFGLIVRMFI, ILIVNVLASLFLGIFEGLNIT, LILFIFVGFLGCFSTFSSFIY, and LILLIYYAEVILLSFLFFCLG. Na(+) is bound by residues glycine 72 and serine 75.

This sequence belongs to the fluoride channel Fluc/FEX (TC 1.A.43) family.

The protein localises to the cell inner membrane. The catalysed reaction is fluoride(in) = fluoride(out). With respect to regulation, na(+) is not transported, but it plays an essential structural role and its presence is essential for fluoride channel function. In terms of biological role, fluoride-specific ion channel. Important for reducing fluoride concentration in the cell, thus reducing its toxicity. This Prochlorococcus marinus subsp. pastoris (strain CCMP1986 / NIES-2087 / MED4) protein is Fluoride-specific ion channel FluC 2.